A 96-amino-acid polypeptide reads, in one-letter code: Cytochrome oxidase assembly factor 4 (96 aa).

Residues 36–77 (KTGCYVENLALQLCHAETGDWRQCFNEMALFRKCWEKNGNRE) enclose the CHCH domain. Short sequence motifs (cx9C motif) lie at residues 39–49 (CYVENLALQLC) and 59–69 (CFNEMALFRKC). Disulfide bonds link cysteine 39-cysteine 69 and cysteine 49-cysteine 59.

The protein belongs to the COA4 family.

Its subcellular location is the mitochondrion inner membrane. It localises to the mitochondrion intermembrane space. In terms of biological role, involved in cytochrome c oxidase assembly or stability. This chain is Cytochrome oxidase assembly factor 4 (COA4), found in Saccharomyces cerevisiae (strain ATCC 204508 / S288c) (Baker's yeast).